Reading from the N-terminus, the 200-residue chain is Putative 3-methyladenine DNA glycosylase (200 aa).

This sequence belongs to the DNA glycosylase MPG family.

In Rhodopseudomonas palustris (strain BisB18), this protein is Putative 3-methyladenine DNA glycosylase.